A 323-amino-acid polypeptide reads, in one-letter code: Protein MEI2-like 6 (323 aa).

In Oryza sativa subsp. japonica (Rice), this protein is Protein MEI2-like 6 (ML6).